Reading from the N-terminus, the 332-residue chain is L-lactate dehydrogenase A chain (332 aa).

Ala-2 carries the post-translational modification N-acetylalanine. The residue at position 5 (Lys-5) is an N6-acetyllysine; alternate. Position 5 is an N6-succinyllysine; alternate (Lys-5). Residue Lys-14 is modified to N6-acetyllysine. 29–57 (GAVGMACAISILMKDLADELALVDVMEDK) contributes to the NAD(+) binding site. Lys-57 carries the post-translational modification N6-acetyllysine; alternate. Lys-57 is covalently cross-linked (Glycyl lysine isopeptide (Lys-Gly) (interchain with G-Cter in SUMO2); alternate). The residue at position 81 (Lys-81) is an N6-acetyllysine. NAD(+) is bound at residue Arg-99. Arg-106 contributes to the substrate binding site. Residue Lys-118 is modified to N6-acetyllysine; alternate. Lys-118 is modified (N6-succinyllysine; alternate). Position 126 is an N6-acetyllysine (Lys-126). Asn-138 is a binding site for NAD(+). Residues Asn-138 and Arg-169 each coordinate substrate. His-193 (proton acceptor) is an active-site residue. Residues Lys-224 and Lys-232 each carry the N6-acetyllysine modification. Position 239 is a phosphotyrosine (Tyr-239). N6-acetyllysine is present on Lys-243. Thr-248 contributes to the substrate binding site. Thr-309 is subject to Phosphothreonine. Position 310 is a phosphoserine (Ser-310). Lys-318 carries the N6-acetyllysine; alternate modification. Lys-318 carries the post-translational modification N6-succinyllysine; alternate. Position 322 is a phosphothreonine (Thr-322).

This sequence belongs to the LDH/MDH superfamily. LDH family. Homotetramer. Interacts with PTEN upstream reading frame protein MP31. ISGylated.

The protein resides in the cytoplasm. It carries out the reaction (S)-lactate + NAD(+) = pyruvate + NADH + H(+). It functions in the pathway fermentation; pyruvate fermentation to lactate; (S)-lactate from pyruvate: step 1/1. Its function is as follows. Interconverts simultaneously and stereospecifically pyruvate and lactate with concomitant interconversion of NADH and NAD(+). The protein is L-lactate dehydrogenase A chain (LDHA) of Oryctolagus cuniculus (Rabbit).